A 300-amino-acid polypeptide reads, in one-letter code: Cation-efflux pump FieF (300 aa).

Transmembrane regions (helical) follow at residues 12-32, 39-59, 82-102, and 114-134; these read AAIA…FAWW, ILAA…NLLV, AALA…LTGI, and PGVG…LVSF. Residues D45 and D49 each coordinate Zn(2+). Zn(2+) is bound by residues H153 and D157. 2 helical membrane passes run 156–176 and 178–198; these read SDVM…YGWH and ADAL…LRMG.

The protein belongs to the cation diffusion facilitator (CDF) transporter (TC 2.A.4) family. FieF subfamily. Homodimer.

The protein localises to the cell inner membrane. It catalyses the reaction Zn(2+)(in) + H(+)(out) = Zn(2+)(out) + H(+)(in). The enzyme catalyses Cd(2+)(in) + H(+)(out) = Cd(2+)(out) + H(+)(in). It carries out the reaction Fe(2+)(in) + H(+)(out) = Fe(2+)(out) + H(+)(in). Functionally, divalent metal cation transporter which exports Zn(2+), Cd(2+) and possibly Fe(2+). May be involved in zinc and iron detoxification by efflux. The sequence is that of Cation-efflux pump FieF from Escherichia coli O7:K1 (strain IAI39 / ExPEC).